A 299-amino-acid chain; its full sequence is Pyrroline-5-carboxylate reductase 2 (299 aa).

It belongs to the pyrroline-5-carboxylate reductase family. Homodecamer; composed of 5 homodimers.

It carries out the reaction L-proline + NADP(+) = (S)-1-pyrroline-5-carboxylate + NADPH + 2 H(+). The enzyme catalyses L-proline + NAD(+) = (S)-1-pyrroline-5-carboxylate + NADH + 2 H(+). It participates in amino-acid biosynthesis; L-proline biosynthesis; L-proline from L-glutamate 5-semialdehyde: step 1/1. This Dictyostelium discoideum (Social amoeba) protein is Pyrroline-5-carboxylate reductase 2 (pycr2).